A 197-amino-acid polypeptide reads, in one-letter code: UPF0228 protein MA_3125 (197 aa).

Belongs to the UPF0228 family.

The chain is UPF0228 protein MA_3125 from Methanosarcina acetivorans (strain ATCC 35395 / DSM 2834 / JCM 12185 / C2A).